We begin with the raw amino-acid sequence, 335 residues long: Ubiquinone biosynthesis protein COQ4, mitochondrial (335 aa).

The N-terminal 10 residues, 1 to 10, are a transit peptide targeting the mitochondrion; the sequence is MLRLSLLRST. His210, Asp211, His214, and Glu226 together coordinate Zn(2+).

The protein belongs to the COQ4 family. Component of a multi-subunit COQ enzyme complex, composed of at least COQ3, COQ4, COQ5, COQ6, COQ7 and COQ9. Interacts with COQ3. The cofactor is Zn(2+).

The protein localises to the mitochondrion inner membrane. It carries out the reaction 4-hydroxy-3-methoxy-5-(all-trans-hexaprenyl)benzoate + H(+) = 2-methoxy-6-(all-trans-hexaprenyl)phenol + CO2. It functions in the pathway cofactor biosynthesis; ubiquinone biosynthesis. Lyase that catalyzes the C1-decarboxylation of 4-hydroxy-3-methoxy-5-(all-trans-hexaprenyl)benzoic acid into 2-methoxy-6-(all-trans-hexaprenyl)phenol during ubiquinone biosynthesis. This chain is Ubiquinone biosynthesis protein COQ4, mitochondrial, found in Saccharomyces cerevisiae (strain AWRI1631) (Baker's yeast).